Consider the following 342-residue polypeptide: Ferredoxin--NADP reductase (342 aa).

Cys17, Asp36, Gln44, Tyr49, Ile89, Phe124, Asp289, and Thr330 together coordinate FAD.

It belongs to the ferredoxin--NADP reductase type 2 family. In terms of assembly, homodimer. It depends on FAD as a cofactor.

The catalysed reaction is 2 reduced [2Fe-2S]-[ferredoxin] + NADP(+) + H(+) = 2 oxidized [2Fe-2S]-[ferredoxin] + NADPH. This is Ferredoxin--NADP reductase from Rhodopseudomonas palustris (strain BisB5).